We begin with the raw amino-acid sequence, 603 residues long: Elongation factor 4 (603 aa).

The region spanning aspartate 7–lysine 191 is the tr-type G domain. Residues aspartate 19–threonine 24 and asparagine 138–aspartate 141 each bind GTP.

Belongs to the TRAFAC class translation factor GTPase superfamily. Classic translation factor GTPase family. LepA subfamily.

The protein localises to the cell inner membrane. The catalysed reaction is GTP + H2O = GDP + phosphate + H(+). Required for accurate and efficient protein synthesis under certain stress conditions. May act as a fidelity factor of the translation reaction, by catalyzing a one-codon backward translocation of tRNAs on improperly translocated ribosomes. Back-translocation proceeds from a post-translocation (POST) complex to a pre-translocation (PRE) complex, thus giving elongation factor G a second chance to translocate the tRNAs correctly. Binds to ribosomes in a GTP-dependent manner. The chain is Elongation factor 4 from Rhodopseudomonas palustris (strain BisA53).